We begin with the raw amino-acid sequence, 261 residues long: 5-oxoprolinase subunit A (261 aa).

Belongs to the LamB/PxpA family. As to quaternary structure, forms a complex composed of PxpA, PxpB and PxpC.

The enzyme catalyses 5-oxo-L-proline + ATP + 2 H2O = L-glutamate + ADP + phosphate + H(+). Its function is as follows. Catalyzes the cleavage of 5-oxoproline to form L-glutamate coupled to the hydrolysis of ATP to ADP and inorganic phosphate. The chain is 5-oxoprolinase subunit A from Symbiobacterium thermophilum (strain DSM 24528 / JCM 14929 / IAM 14863 / T).